The chain runs to 361 residues: Probable purine permease 5 (361 aa).

9 helical membrane-spanning segments follow: residues 37 to 57, 70 to 90, 105 to 125, 134 to 154, 158 to 178, 193 to 213, 235 to 255, 285 to 305, and 315 to 335; these read WILL…SSLL, WIIS…LLPT, LVLS…MYAY, TSSL…YLIV, LNAS…IIAL, YFAG…IFAL, VMVS…SNDF, LGVL…AGVL, and VAAV…SLVL. The 104-residue stretch at 75–178 folds into the EamA domain; the sequence is VAVAGWPITC…ITGAMAIIAL (104 aa).

This sequence belongs to the purine permeases (TC 2.A.7.14) family.

The protein localises to the membrane. The protein is Probable purine permease 5 (PUP5) of Arabidopsis thaliana (Mouse-ear cress).